We begin with the raw amino-acid sequence, 663 residues long: Bifunctional polymyxin resistance protein ArnA (663 aa).

A formyltransferase ArnAFT region spans residues 1 to 307 (MSSKAVVFAY…ELGLVDGSVL (307 aa)). His106 serves as the catalytic Proton donor; for formyltransferase activity. (6R)-10-formyltetrahydrofolate-binding positions include Arg116 and 138 to 142 (VKRAD). The interval 317-663 (RRTRVLILGV…EAMLEIADKK (347 aa)) is dehydrogenase ArnADH. Residues Asp350 and 371–372 (DI) contribute to the NAD(+) site. Residues Ala396, Tyr401, and 435–436 (TS) each bind UDP-alpha-D-glucuronate. The active-site Proton acceptor; for decarboxylase activity is Glu437. UDP-alpha-D-glucuronate is bound by residues Arg463, Asn494, 528–537 (RLFDGGEQKR), and Tyr615. The active-site Proton donor; for decarboxylase activity is the Arg621.

The protein in the N-terminal section; belongs to the Fmt family. UDP-L-Ara4N formyltransferase subfamily. This sequence in the C-terminal section; belongs to the NAD(P)-dependent epimerase/dehydratase family. UDP-glucuronic acid decarboxylase subfamily. In terms of assembly, homohexamer, formed by a dimer of trimers.

The enzyme catalyses UDP-alpha-D-glucuronate + NAD(+) = UDP-beta-L-threo-pentopyranos-4-ulose + CO2 + NADH. The catalysed reaction is UDP-4-amino-4-deoxy-beta-L-arabinose + (6R)-10-formyltetrahydrofolate = UDP-4-deoxy-4-formamido-beta-L-arabinose + (6S)-5,6,7,8-tetrahydrofolate + H(+). It functions in the pathway nucleotide-sugar biosynthesis; UDP-4-deoxy-4-formamido-beta-L-arabinose biosynthesis; UDP-4-deoxy-4-formamido-beta-L-arabinose from UDP-alpha-D-glucuronate: step 1/3. The protein operates within nucleotide-sugar biosynthesis; UDP-4-deoxy-4-formamido-beta-L-arabinose biosynthesis; UDP-4-deoxy-4-formamido-beta-L-arabinose from UDP-alpha-D-glucuronate: step 3/3. It participates in bacterial outer membrane biogenesis; lipopolysaccharide biosynthesis. In terms of biological role, bifunctional enzyme that catalyzes the oxidative decarboxylation of UDP-glucuronic acid (UDP-GlcUA) to UDP-4-keto-arabinose (UDP-Ara4O) and the addition of a formyl group to UDP-4-amino-4-deoxy-L-arabinose (UDP-L-Ara4N) to form UDP-L-4-formamido-arabinose (UDP-L-Ara4FN). The modified arabinose is attached to lipid A and is required for resistance to polymyxin and cationic antimicrobial peptides. This Pseudomonas fluorescens (strain SBW25) protein is Bifunctional polymyxin resistance protein ArnA.